Reading from the N-terminus, the 1511-residue chain is ATP-dependent permease PDR12 (1511 aa).

Residues 1–21 (MSSTDEHIEKDISSRSNHDDD) are compositionally biased toward basic and acidic residues. Residues 1-37 (MSSTDEHIEKDISSRSNHDDDYANSVQSYAASEGQVD) form a disordered region. The residue at position 2 (serine 2) is an N-acetylserine. At 2-508 (SSTDEHIEKD…RGFQRVKGDS (507 aa)) the chain is on the cytoplasmic side. 3 positions are modified to phosphoserine: serine 32, serine 52, and serine 56. The ABC transporter 1 domain occupies 144–397 (IPAHLISKFT…FQRMGWVKPN (254 aa)). Residue lysine 426 forms a Glycyl lysine isopeptide (Lys-Gly) (interchain with G-Cter in ubiquitin) linkage. Residues 509–529 (TYTKVYLSSFLIKALIIGSMF) form a helical membrane-spanning segment. At 530-548 (HKIDDKSQSTTAGAYSRGG) the chain is on the extracellular side. The chain crosses the membrane as a helical span at residues 549 to 569 (MLFYVLLFASVTSLAEIGNSF). Topologically, residues 570-597 (SSRPVIVKHKSYSMYHLSAESLQEIITE) are cytoplasmic. The chain crosses the membrane as a helical span at residues 598–618 (FPTKFVAIVILCLITYWIPFM). The Extracellular segment spans residues 619–622 (KYEA). Residues 623-643 (GAFFQYILYLLTVQQCTSFIF) form a helical membrane-spanning segment. The Cytoplasmic segment spans residues 644-657 (KFVATMSKSGVDAH). Residues 658–678 (AVGGLWVLMLCVYAGFVLPIG) traverse the membrane as a helical segment. Residues 679 to 765 (EMHHWIRWLH…FAYKHAWRNW (87 aa)) lie on the Extracellular side of the membrane. The chain crosses the membrane as a helical span at residues 766–786 (GVNIVWTFGYIVFNVILSEYL). At 787 to 1182 (KPVEGGGDLL…WRSPVYIRAK (396 aa)) the chain is on the cytoplasmic side. In terms of domain architecture, ABC transporter 2 spans 836-1084 (IAEKDVFTWN…TLLKYFERQS (249 aa)). Residues 878–885 (GESGAGKT) and 972–979 (AEALVGKT) each bind ATP. A helical transmembrane segment spans residues 1183–1203 (FFECVACALFVGLSYVGVNHS). Valine 1204 is a topological domain (extracellular). Residues 1205–1225 (GGAIEAFSSIFMLLLIALAMI) traverse the membrane as a helical segment. The Cytoplasmic portion of the chain corresponds to 1226–1254 (NQLHVFAYDSRELYEVREAASNTFHWSVL). A helical membrane pass occupies residues 1255-1275 (LLCHAAVENFWSTLCQFMCFI). Topologically, residues 1276–1291 (CYYWPAQFSGRASHAG) are extracellular. The chain crosses the membrane as a helical span at residues 1292–1312 (FFFFFYVLIFPLYFVTYGLWI). Over 1313–1318 (LYMSPD) the chain is Cytoplasmic. A helical membrane pass occupies residues 1319-1339 (VPSASMINSNLFAAMLLFCGI). Topologically, residues 1340 to 1444 (LQPREKMPAF…NVKWDHRWRN (105 aa)) are extracellular. N-linked (GlcNAc...) asparagine glycosylation is present at asparagine 1405. A helical transmembrane segment spans residues 1445–1465 (FGFMWAYICFNIAAMLICYYV). Topologically, residues 1466–1511 (VRVKVWSLKSVLNFKKWFNGPRKERHEKDTNIFQTVPGDENKITKK) are cytoplasmic.

This sequence belongs to the ABC transporter superfamily. ABCG family. PDR (TC 3.A.1.205) subfamily.

It is found in the cell membrane. Functionally, plasma membrane transporter which mediates resistance to water-soluble, monocarboxylic acids with chain lengths of from C1 to C7 by active extrusion of the preservative anions from the cytosol. Also involved in the export of aromatic and branched-chain organic acids produced in amino acid catabolism. This is ATP-dependent permease PDR12 (PDR12) from Saccharomyces cerevisiae (strain ATCC 204508 / S288c) (Baker's yeast).